The sequence spans 343 residues: MKNQWKTSDFDYNLPVELIAQRPLADRSGSRLLYIDRSRRTVSHRQFNGFVEQVKPNDLVVLNDTKVIPARLFGHKQTGGKVECLVERILSKDRFLAHIRASKAPKLGSQIIIADNFKIIIEGRYNDLFECVLHSSASILDLLYQHGRIPLPPYIQREPDKDDQARYQTIFAERAGAVAAPTAGLHFNEETFDALRKKGAAITYVTLHVGAGTFQPVRADSLADHRMHHEWMEVSKAVCDAIAKCRKNNGRVIAVGTTVMRCLETATKNGECRPYAGETDLFIYPGFQFNCVDALLTNFHLPKSTLLMLVCAFGGYELVMEAYQKAVENRYRFFSYGDAMLIS.

It belongs to the QueA family. In terms of assembly, monomer.

It is found in the cytoplasm. The enzyme catalyses 7-aminomethyl-7-carbaguanosine(34) in tRNA + S-adenosyl-L-methionine = epoxyqueuosine(34) in tRNA + adenine + L-methionine + 2 H(+). It participates in tRNA modification; tRNA-queuosine biosynthesis. Functionally, transfers and isomerizes the ribose moiety from AdoMet to the 7-aminomethyl group of 7-deazaguanine (preQ1-tRNA) to give epoxyqueuosine (oQ-tRNA). The sequence is that of S-adenosylmethionine:tRNA ribosyltransferase-isomerase from Coxiella burnetii (strain Dugway 5J108-111).